Here is a 292-residue protein sequence, read N- to C-terminus: NAD kinase (292 aa).

Residue D73 is the Proton acceptor of the active site. Residues 73-74, 147-148, H158, R175, D177, 188-193, and Q247 contribute to the NAD(+) site; these read DG, NE, and TAYSLS.

Belongs to the NAD kinase family. Requires a divalent metal cation as cofactor.

It localises to the cytoplasm. It catalyses the reaction NAD(+) + ATP = ADP + NADP(+) + H(+). Its function is as follows. Involved in the regulation of the intracellular balance of NAD and NADP, and is a key enzyme in the biosynthesis of NADP. Catalyzes specifically the phosphorylation on 2'-hydroxyl of the adenosine moiety of NAD to yield NADP. In Sodalis glossinidius (strain morsitans), this protein is NAD kinase.